The chain runs to 92 residues: UPF0223 protein SZO_10560 (92 aa).

It belongs to the UPF0223 family.

The polypeptide is UPF0223 protein SZO_10560 (Streptococcus equi subsp. zooepidemicus (strain H70)).